We begin with the raw amino-acid sequence, 192 residues long: UPF0301 protein BMA10247_1859 (192 aa).

The protein belongs to the UPF0301 (AlgH) family.

This Burkholderia mallei (strain NCTC 10247) protein is UPF0301 protein BMA10247_1859.